A 686-amino-acid polypeptide reads, in one-letter code: Osmo-dependent choline transporter BetT2 (686 aa).

Topologically, residues 1–22 (MATDNPRAVDDQETHPKDRLNR) are cytoplasmic. The chain crosses the membrane as a helical span at residues 23 to 43 (VVFYVSALIILIFSLTTILFN). Over 44–60 (DFANRALNQVLDWVSST) the chain is Periplasmic. The chain crosses the membrane as a helical span at residues 61-81 (FSWYYLLAATLYMVFVIFIAC). Over 82–100 (SRYGNIKLGPKHSKPEFSL) the chain is Cytoplasmic. Residues 101–121 (LSWSAMLFSAGIGIDLMFFSV) traverse the membrane as a helical segment. Topologically, residues 122 to 150 (AEPLSHYMHPPVGEGQTYEAARQGMVWTL) are periplasmic. A helical membrane pass occupies residues 151–171 (FHYGLTGWCMYALIGMALGYF). Residues 172-203 (SYRYNLPLTIRSALYPIFGKKINGPIGHSVDT) are Cytoplasmic-facing. A helical membrane pass occupies residues 204–224 (AAVIGTIFGIATTCGIGVVQL). Over 225–237 (NYGLHVLFDLPEN) the chain is Periplasmic. The helical transmembrane segment at 238–258 (LWVQTALILVAVIITIISVTS) threads the bilayer. Residues 259-265 (GVNKGLR) lie on the Cytoplasmic side of the membrane. Residues 266–286 (ILSEVNIYVSVGLMLFILFLG) form a helical membrane-spanning segment. Topologically, residues 287-325 (NTEFLLNALVQNVGDYLSRFPSLALESFAFDQPKEWMNS) are periplasmic. The chain crosses the membrane as a helical span at residues 326-346 (WTLFFWAWWVAWSPFVGLFLA). Residues 347–356 (RISRGRTIRE) are Cytoplasmic-facing. Residues 357–377 (FVSGTLIIPLLFTLTWLSIFG) form a helical membrane-spanning segment. At 378–412 (NSALHNVIFDGNIALAETVLSNPAHGFYDLLAQYP) the chain is on the periplasmic side. The helical transmembrane segment at 413–433 (WFPFIAGVATITGLLFYVTSA) threads the bilayer. Residues 434-459 (DSGALVLGNFTTQFTNIDHDAPRWLS) are Cytoplasmic-facing. The helical transmembrane segment at 460 to 480 (VFWAVAIGLLTLAMLMTNGIT) threads the bilayer. Topologically, residues 481-484 (ALQN) are periplasmic. A helical membrane pass occupies residues 485–505 (ATIIMGLPFSFVMFLVMAGLY). Residues 506-686 (KSLRLEDYRQ…NRPLFPDPKA (181 aa)) lie on the Cytoplasmic side of the membrane.

It belongs to the BCCT transporter (TC 2.A.15) family.

The protein localises to the cell inner membrane. In terms of biological role, uptake of choline in the presence of high salinity. May primarily serve for osmoprotection. The chain is Osmo-dependent choline transporter BetT2 from Acinetobacter baylyi (strain ATCC 33305 / BD413 / ADP1).